The primary structure comprises 156 residues: Transmembrane protein 50 homolog (156 aa).

The next 4 membrane-spanning stretches (helical) occupy residues 5–25, 45–65, 87–107, and 124–144; these read IMKYLPALAGIIFTAGWFLWI, IQWIYYLPGIFATLGMVMANI, VWLFISFAISFGCIGAALWIM, and PGIAITLQTSLIFLSSLLLVF.

This sequence belongs to the UPF0220 family.

It localises to the membrane. The polypeptide is Transmembrane protein 50 homolog (tmem50) (Dictyostelium discoideum (Social amoeba)).